The chain runs to 155 residues: Rhombotin-1 (155 aa).

LIM zinc-binding domains are found at residues 21–83 (KGCA…LFGT) and 85–147 (GNCA…GQLN).

It is found in the nucleus. Functionally, may be involved in gene regulation within neural lineage cells potentially by direct DNA binding or by binding to other transcription factors. This Danio rerio (Zebrafish) protein is Rhombotin-1.